Consider the following 332-residue polypeptide: tRNA-dihydrouridine synthase B (332 aa).

FMN contacts are provided by residues 16–18 (PMA) and Gln-70. The Proton donor role is filled by Cys-100. FMN is bound by residues Lys-139, 200–202 (NGD), and 224–225 (GR).

Belongs to the Dus family. DusB subfamily. FMN serves as cofactor.

The catalysed reaction is a 5,6-dihydrouridine in tRNA + NAD(+) = a uridine in tRNA + NADH + H(+). It catalyses the reaction a 5,6-dihydrouridine in tRNA + NADP(+) = a uridine in tRNA + NADPH + H(+). Catalyzes the synthesis of 5,6-dihydrouridine (D), a modified base found in the D-loop of most tRNAs, via the reduction of the C5-C6 double bond in target uridines. The protein is tRNA-dihydrouridine synthase B of Xanthomonas campestris pv. campestris (strain ATCC 33913 / DSM 3586 / NCPPB 528 / LMG 568 / P 25).